The primary structure comprises 496 residues: N-acetylmuramoyl-L-alanine amidase LytC (496 aa).

The first 24 residues, 1 to 24, serve as a signal peptide directing secretion; it reads MRSYIKVLTMCFLGLILFVPTALA. Tandem repeats lie at residues 30–128, 129–222, and 223–318. The segment at 30–318 is 3 X tandem repeats; the sequence is RVGGSNRYGT…VANQLKNPVV (289 aa). Residues 322–490 enclose the MurNAc-LAA domain; it reads IFIDPGHGDQ…DKAAQAIHDG (169 aa).

It belongs to the N-acetylmuramoyl-L-alanine amidase 3 family.

It is found in the secreted. The protein resides in the cell wall. It carries out the reaction Hydrolyzes the link between N-acetylmuramoyl residues and L-amino acid residues in certain cell-wall glycopeptides.. Its function is as follows. Autolysins are cell wall hydrolases involved in some important biological processes such as cell separation, cell-wall turnover, competence for genetic transformation, formation of the flagella - in particular of its basal body - and sporulation. Has a high affinity for teichoic acid-endowed peptidoglycan. LytC is required for efficient swarming motility but not at the level of cell separation or flagellum biosynthesis. Rather, LytC appears to be important for proper flagellar function. In Bacillus subtilis (strain 168), this protein is N-acetylmuramoyl-L-alanine amidase LytC (lytC).